The chain runs to 78 residues: Large ribosomal subunit protein bL28 (78 aa).

The tract at residues M1 to A21 is disordered.

The protein belongs to the bacterial ribosomal protein bL28 family.

The chain is Large ribosomal subunit protein bL28 from Bordetella petrii (strain ATCC BAA-461 / DSM 12804 / CCUG 43448).